A 591-amino-acid polypeptide reads, in one-letter code: Autotransporter adhesin NhhA (591 aa).

The signal sequence occupies residues 1–51 (MNKIYRIIWNSALNAWVVVSELTRNHTKRASATVKTAVLATLLFATVQASA). The interval 52–503 (NNEEQEEDLY…TNVAQLKGVA (452 aa)) is surface exposed passenger domain. Positions 504–591 (QNLNNRIDNV…GASASVGYQW (88 aa)) are translocator domain. Transmembrane regions (beta stranded) follow at residues 537-547 (GKSMMAIGGGT), 551-561 (EAGYAIGYSSI), 570-576 (KGTASGN), and 580-591 (HFGASASVGYQW).

It belongs to the autotransporter-2 (AT-2) (TC 1.B.40) family. Homotrimer.

The protein localises to the cell surface. Its subcellular location is the cell outer membrane. Functionally, involved in adhesion of capsulated meningococci to host epithelial cells. Interacts with laminin and heparan sulfate, promoting the adherence to the extracellular matrix (ECM) components. The polypeptide is Autotransporter adhesin NhhA (Neisseria meningitidis serogroup B (strain ATCC BAA-335 / MC58)).